The chain runs to 302 residues: Acetaldehyde dehydrogenase 2 (302 aa).

Cys130 serves as the catalytic Acyl-thioester intermediate. NAD(+)-binding positions include 161–169 (SVGPGTRRN) and Asn272.

Belongs to the acetaldehyde dehydrogenase family.

The catalysed reaction is acetaldehyde + NAD(+) + CoA = acetyl-CoA + NADH + H(+). The polypeptide is Acetaldehyde dehydrogenase 2 (Cupriavidus necator (strain ATCC 17699 / DSM 428 / KCTC 22496 / NCIMB 10442 / H16 / Stanier 337) (Ralstonia eutropha)).